Consider the following 167-residue polypeptide: Endoribonuclease YbeY (167 aa).

The Zn(2+) site is built by histidine 131, histidine 135, and histidine 141.

The protein belongs to the endoribonuclease YbeY family. It depends on Zn(2+) as a cofactor.

It localises to the cytoplasm. Its function is as follows. Single strand-specific metallo-endoribonuclease involved in late-stage 70S ribosome quality control and in maturation of the 3' terminus of the 16S rRNA. The polypeptide is Endoribonuclease YbeY (Rickettsia rickettsii (strain Iowa)).